Here is a 59-residue protein sequence, read N- to C-terminus: Potassium channel toxin alpha-KTx 16.2 (59 aa).

Positions methionine 1–alanine 22 are cleaved as a signal peptide. 3 cysteine pairs are disulfide-bonded: cysteine 30–cysteine 51, cysteine 36–cysteine 56, and cysteine 40–cysteine 58.

The protein belongs to the short scorpion toxin superfamily. Potassium channel inhibitor family. Alpha-KTx 16 subfamily. In terms of tissue distribution, expressed by the venom gland.

Its subcellular location is the secreted. In terms of biological role, alpha-KTx 16.2: inhibits large conductance calcium-activated potassium channels (KCa1.1/Slo-beta4 KCNMA1/KCNMB4). It appears to block channel activity by a simple bimolecular inhibition process. Shows a fast association rate and a slow dissociation rate of binding on rat brain synaptosome. Significantly inhibits voltage-dependent sodium current and voltage-dependent delayed rectifier potassium currents. Functionally, significantly inhibits voltage-dependent sodium current (Nav) and voltage-dependent delayed rectifier potassium current. This Olivierus martensii (Manchurian scorpion) protein is Potassium channel toxin alpha-KTx 16.2.